The chain runs to 722 residues: Ras and EF-hand domain-containing protein (722 aa).

EF-hand domains lie at 5–39 (DELS…ELKV) and 39–74 (VSPS…ARGL). A compositionally biased stretch (basic and acidic residues) spans 75–84 (HMPEGKKDVE). Residues 75-109 (HMPEGKKDVEQGEPPKSPSTPDKEEKPEETSSPAW) are disordered. A coiled-coil region spans residues 156–335 (REIRLQSTEM…ANRKLHDSND (180 aa)). Positions 355–374 (INTSPGSTISRNSPKLTRCT) are enriched in polar residues. 2 disordered regions span residues 355–384 (INTS…PRSS) and 439–491 (FHRS…SGAS). Low complexity predominate over residues 480-491 (SNPVSRSSSGAS). GTP-binding positions include 532 to 537 (AVGKSS), 635 to 638 (NKAD), and 672 to 673 (AK).

It belongs to the small GTPase superfamily. Rab family. In terms of assembly, homodimer.

Its subcellular location is the cytoplasm. It localises to the perinuclear region. Binds predominantly GDP, and also GTP. This chain is Ras and EF-hand domain-containing protein (rasef), found in Xenopus tropicalis (Western clawed frog).